A 210-amino-acid polypeptide reads, in one-letter code: Na(+)-translocating NADH-quinone reductase subunit D (210 aa).

Transmembrane regions (helical) follow at residues 42–62, 72–92, 103–123, 131–151, and 178–198; these read FVMT…VSLI, IIVQ…ILKA, VFVG…AFAM, FIDG…VGFF, and NGLM…IWAI.

Belongs to the NqrDE/RnfAE family. Composed of six subunits; NqrA, NqrB, NqrC, NqrD, NqrE and NqrF.

Its subcellular location is the cell inner membrane. The catalysed reaction is a ubiquinone + n Na(+)(in) + NADH + H(+) = a ubiquinol + n Na(+)(out) + NAD(+). In terms of biological role, NQR complex catalyzes the reduction of ubiquinone-1 to ubiquinol by two successive reactions, coupled with the transport of Na(+) ions from the cytoplasm to the periplasm. NqrA to NqrE are probably involved in the second step, the conversion of ubisemiquinone to ubiquinol. In Vibrio cholerae serotype O1 (strain M66-2), this protein is Na(+)-translocating NADH-quinone reductase subunit D.